Here is a 487-residue protein sequence, read N- to C-terminus: Lysine--tRNA ligase (487 aa).

Mg(2+) contacts are provided by E398 and E405.

Belongs to the class-II aminoacyl-tRNA synthetase family. As to quaternary structure, homodimer. Requires Mg(2+) as cofactor.

Its subcellular location is the cytoplasm. It carries out the reaction tRNA(Lys) + L-lysine + ATP = L-lysyl-tRNA(Lys) + AMP + diphosphate. The chain is Lysine--tRNA ligase from Mycoplasma mobile (strain ATCC 43663 / 163K / NCTC 11711) (Mesomycoplasma mobile).